Consider the following 34-residue polypeptide: Photosystem I reaction center subunit XII (34 aa).

Residues V4–A24 form a helical membrane-spanning segment.

Belongs to the PsaM family.

It is found in the cellular thylakoid membrane. This chain is Photosystem I reaction center subunit XII, found in Synechococcus sp. (strain CC9605).